We begin with the raw amino-acid sequence, 194 residues long: Imidazoleglycerol-phosphate dehydratase (194 aa).

The protein belongs to the imidazoleglycerol-phosphate dehydratase family.

The protein resides in the cytoplasm. The catalysed reaction is D-erythro-1-(imidazol-4-yl)glycerol 3-phosphate = 3-(imidazol-4-yl)-2-oxopropyl phosphate + H2O. It participates in amino-acid biosynthesis; L-histidine biosynthesis; L-histidine from 5-phospho-alpha-D-ribose 1-diphosphate: step 6/9. The polypeptide is Imidazoleglycerol-phosphate dehydratase (Methanothermobacter thermautotrophicus (strain ATCC 29096 / DSM 1053 / JCM 10044 / NBRC 100330 / Delta H) (Methanobacterium thermoautotrophicum)).